The following is a 218-amino-acid chain: Adenylate kinase (218 aa).

10–15 (GAGKGT) is an ATP binding site. The segment at 30–59 (STGDMLRAAVKAGTPLGQQAKAVMDAGQLV) is NMP. Residues threonine 31, arginine 36, 57–59 (QLV), 85–88 (GFPR), and glutamine 92 contribute to the AMP site. The interval 122 to 159 (GRRSHPASGRTYHVKFNPPKVEGQDDVTGEPLVQREDD) is LID. ATP-binding positions include arginine 123 and 132-133 (TY). Residues 127-151 (PASGRTYHVKFNPPKVEGQDDVTGE) are disordered. AMP is bound by residues arginine 156 and arginine 167. Glycine 203 is an ATP binding site.

Belongs to the adenylate kinase family. As to quaternary structure, monomer.

It localises to the cytoplasm. The catalysed reaction is AMP + ATP = 2 ADP. It functions in the pathway purine metabolism; AMP biosynthesis via salvage pathway; AMP from ADP: step 1/1. Its function is as follows. Catalyzes the reversible transfer of the terminal phosphate group between ATP and AMP. Plays an important role in cellular energy homeostasis and in adenine nucleotide metabolism. The polypeptide is Adenylate kinase (Delftia acidovorans (strain DSM 14801 / SPH-1)).